The chain runs to 96 residues: MSELGNLETTVTGKIKRFNNGGGYYYTTVVSPAADAYSFPPVIRIKSKKSLGRVGDEIADIHCRITGYERSFPYTDKQTGEQSRGFNVDMLLELLE.

It belongs to the inovirus G5P protein family. Homodimer.

Its function is as follows. Binds to DNA in a highly cooperative manner without pronounced sequence specificity. During synthesis of the single-stranded (progeny) viral DNA, prevents the conversion into the double-stranded replicative form. G5P is displaced by the capsid protein G8P during phage assembly on the inner bacterial membrane. This chain is DNA-Binding protein G5P (V), found in Escherichia coli (Bacteriophage If1).